A 215-amino-acid polypeptide reads, in one-letter code: Transcription elongation factor A protein-like 4 (215 aa).

The residue at position 1 (methionine 1) is an N-acetylmethionine. A disordered region spans residues methionine 1 to glycine 133. A phosphoserine mark is found at serine 6, serine 88, and serine 102. Positions glutamine 25 to serine 102 are enriched in basic and acidic residues.

Belongs to the TFS-II family. TFA subfamily.

It is found in the nucleus. Functionally, may be involved in transcriptional regulation. The sequence is that of Transcription elongation factor A protein-like 4 (TCEAL4) from Homo sapiens (Human).